The primary structure comprises 585 residues: Arginine--tRNA ligase (585 aa).

Residues 131–141 (ANPTGPMHVGH) carry the 'HIGH' region motif.

Belongs to the class-I aminoacyl-tRNA synthetase family. In terms of assembly, monomer.

It is found in the cytoplasm. The enzyme catalyses tRNA(Arg) + L-arginine + ATP = L-arginyl-tRNA(Arg) + AMP + diphosphate. The chain is Arginine--tRNA ligase from Sinorhizobium medicae (strain WSM419) (Ensifer medicae).